Reading from the N-terminus, the 426-residue chain is Putative phosphate permease TC_0064 (426 aa).

11 consecutive transmembrane segments (helical) span residues 1-21 (MWWL…NIGA), 37-57 (LTLR…AVVL), 83-103 (VFGM…ASFF), 104-124 (GWPV…GIIL), 140-160 (VSWL…FSFI), 183-203 (AIII…ARVV), 207-227 (VAFR…IWGV), 260-280 (LVVE…MSFA), 309-329 (VLFI…ATWG), 365-385 (FGFP…VGLA), and 399-419 (IVLS…MFFL).

This sequence belongs to the inorganic phosphate transporter (PiT) (TC 2.A.20) family.

Its subcellular location is the cell membrane. In terms of biological role, potential transporter for phosphate. The protein is Putative phosphate permease TC_0064 of Chlamydia muridarum (strain MoPn / Nigg).